A 327-amino-acid polypeptide reads, in one-letter code: Sphingomyelin synthase-related 2 (327 aa).

5 helical membrane-spanning segments follow: residues 54–74 (LLAT…LAWV), 99–119 (AIRI…LVMF), 131–151 (VFFC…IFQV), 192–212 (LCGD…FLVF), and 220–240 (LQPL…SILL). H201 is a catalytic residue. Residues 241 to 327 (ARKHYMIDIV…TLKKSRRSFE (87 aa)) lie on the Cytoplasmic side of the membrane. Residues H244 and D248 contribute to the active site.

Belongs to the sphingomyelin synthase family.

It localises to the membrane. The sequence is that of Sphingomyelin synthase-related 2 from Caenorhabditis elegans.